Here is a 402-residue protein sequence, read N- to C-terminus: Dual-specificity RNA methyltransferase RlmN (402 aa).

Glu94 functions as the Proton acceptor in the catalytic mechanism. The Radical SAM core domain occupies 100 to 351 (EDDRGTLCIS…ATVRKTRGDD (252 aa)). An intrachain disulfide couples Cys107 to Cys356. Positions 114, 118, and 121 each coordinate [4Fe-4S] cluster. Residues 182–183 (GE), Ser214, 236–238 (SLH), and Asn313 each bind S-adenosyl-L-methionine. The active-site S-methylcysteine intermediate is the Cys356.

Belongs to the radical SAM superfamily. RlmN family. Requires [4Fe-4S] cluster as cofactor.

It is found in the cytoplasm. The catalysed reaction is adenosine(2503) in 23S rRNA + 2 reduced [2Fe-2S]-[ferredoxin] + 2 S-adenosyl-L-methionine = 2-methyladenosine(2503) in 23S rRNA + 5'-deoxyadenosine + L-methionine + 2 oxidized [2Fe-2S]-[ferredoxin] + S-adenosyl-L-homocysteine. It catalyses the reaction adenosine(37) in tRNA + 2 reduced [2Fe-2S]-[ferredoxin] + 2 S-adenosyl-L-methionine = 2-methyladenosine(37) in tRNA + 5'-deoxyadenosine + L-methionine + 2 oxidized [2Fe-2S]-[ferredoxin] + S-adenosyl-L-homocysteine. Its function is as follows. Specifically methylates position 2 of adenine 2503 in 23S rRNA and position 2 of adenine 37 in tRNAs. m2A2503 modification seems to play a crucial role in the proofreading step occurring at the peptidyl transferase center and thus would serve to optimize ribosomal fidelity. This chain is Dual-specificity RNA methyltransferase RlmN, found in Polynucleobacter asymbioticus (strain DSM 18221 / CIP 109841 / QLW-P1DMWA-1) (Polynucleobacter necessarius subsp. asymbioticus).